A 199-amino-acid polypeptide reads, in one-letter code: Histone deacetylase complex subunit SAP25 (199 aa).

Composition is skewed to polar residues over residues glutamine 151 to alanine 163 and glutamine 184 to proline 199. Residues glutamine 151–proline 199 are disordered.

May be a component of the mSIN3A corepressor complex. Interacts with SIN3A. Interacts with HDAC2.

It localises to the nucleus. Its subcellular location is the cytoplasm. Its function is as follows. Involved in the transcriptional repression mediated by the mSIN3A but not the N-CoR corepressor complex. This is Histone deacetylase complex subunit SAP25 (SAP25) from Homo sapiens (Human).